Here is a 323-residue protein sequence, read N- to C-terminus: MVLEMKVIAFVGYPLSGKSTAAEVARELGLPVVVMGDVVREEAARRGLELTDENLGKVARELREKEGMDAIAKRCIPKIRELLKEHGVVVVDGIRGVAEVERFKKAFGDDFVLIAIECPLEVRFERVKMRKRSDDVSSIEELKERDRREESWGLKEAMEMADFTVENTGSYEDFVEKIRQILLKLAKNVEIEIRTKIHPTESEDKVLKAIRNIFPDAEIEISEEGEVYGRAYSLDRFRELLRKQRILDTARSEILKGRNGKEVTIYLNKQTATVSRINFCDENAVLSPIKVTFRLNNIPFSRFLDYIAPETKDGRPVKEIDKL.

The segment at 1–185 (MVLEMKVIAF…EKIRQILLKL (185 aa)) is UPF0200. 12-19 (GYPLSGKS) is an ATP binding site. Residues 186–323 (AKNVEIEIRT…GRPVKEIDKL (138 aa)) form a UPF0201 region.

The protein in the N-terminal section; belongs to the UPF0200 family. It in the C-terminal section; belongs to the UPF0201 family.

This chain is UPF0200/UPF0201 protein AF_1395, found in Archaeoglobus fulgidus (strain ATCC 49558 / DSM 4304 / JCM 9628 / NBRC 100126 / VC-16).